The chain runs to 85 residues: ATP synthase subunit c (85 aa).

2 consecutive transmembrane segments (helical) span residues 10–30 and 53–73; these read IAVA…FAVL and FIIA…ALLF.

The protein belongs to the ATPase C chain family. F-type ATPases have 2 components, F(1) - the catalytic core - and F(0) - the membrane proton channel. F(1) has five subunits: alpha(3), beta(3), gamma(1), delta(1), epsilon(1). F(0) has three main subunits: a(1), b(2) and c(10-14). The alpha and beta chains form an alternating ring which encloses part of the gamma chain. F(1) is attached to F(0) by a central stalk formed by the gamma and epsilon chains, while a peripheral stalk is formed by the delta and b chains.

It localises to the cell inner membrane. F(1)F(0) ATP synthase produces ATP from ADP in the presence of a proton or sodium gradient. F-type ATPases consist of two structural domains, F(1) containing the extramembraneous catalytic core and F(0) containing the membrane proton channel, linked together by a central stalk and a peripheral stalk. During catalysis, ATP synthesis in the catalytic domain of F(1) is coupled via a rotary mechanism of the central stalk subunits to proton translocation. Its function is as follows. Key component of the F(0) channel; it plays a direct role in translocation across the membrane. A homomeric c-ring of between 10-14 subunits forms the central stalk rotor element with the F(1) delta and epsilon subunits. This Vibrio cholerae serotype O1 (strain ATCC 39315 / El Tor Inaba N16961) protein is ATP synthase subunit c.